Consider the following 506-residue polypeptide: Glycine--tRNA ligase (506 aa).

The substrate site is built by Arg-99 and Glu-189. ATP-binding positions include 221 to 223 (RNE), 231 to 236 (FRVREL), 306 to 307 (EI), and 365 to 368 (GVDR). Residue 236-240 (LEQME) coordinates substrate. 361–365 (EPSAG) provides a ligand contact to substrate.

The protein belongs to the class-II aminoacyl-tRNA synthetase family. Homodimer.

The protein localises to the cytoplasm. The catalysed reaction is tRNA(Gly) + glycine + ATP = glycyl-tRNA(Gly) + AMP + diphosphate. Its function is as follows. Catalyzes the attachment of glycine to tRNA(Gly). This is Glycine--tRNA ligase from Deinococcus radiodurans (strain ATCC 13939 / DSM 20539 / JCM 16871 / CCUG 27074 / LMG 4051 / NBRC 15346 / NCIMB 9279 / VKM B-1422 / R1).